Reading from the N-terminus, the 475-residue chain is MVEIILSHLIFDQAYFSKVWPYMDSEYFESGPAKNTFKLIKSHVNEYHSVPSINALNVALENSSFTETEYSGVKTLISKLADSPEDHSWLVKETEKYVQQRAMFNATSKIIEIQTNAELPPEKRNKKMPDVGAIPDIMRQALSISFDSYVGHDWMDDYEARWLSYMNKARKVPFKLRILNKITKGGAETGTLNVLMAGVNVGKSLGLCSLAADYLQLGHNVLYISMEMAEEVCAKRIDANMLDVSLDDIDDGHISYAEYKGKMEKWREKSTLGRLIVKQYPTGGADANTFRSLLNELKLKKNFVPTIIIVDYLGICKSCRIRVYSENSYTTVKAIAEELRALAVETETVLWTAAQVGKQAWDSSDVNMSDIAESAGLPATADFMLAVIETEELAAAEQQLIKQIKSRYGDKNKWNKFLMGVQKGNQKWVEIEQDSTPTEVNEVAGSQQIQAEQNRYQRNESTRAQLDALANELKF.

An SF4 helicase domain is found at 165-444; sequence YMNKARKVPF…STPTEVNEVA (280 aa). Residue 197-204 coordinates ATP; that stretch reads AGVNVGKS. Positions 456-475 are interaction with the helicase assembly factor; it reads YQRNESTRAQLDALANELKF.

It belongs to the helicase family. DnaB subfamily. In terms of assembly, homohexamer. The homohexamer is a trimer of asymmetric dimers. Interacts with the DNA primase; this interaction forms the active primosome complex, which is composed of 6 helicase and 1 primase subunits and expresses full helicase and primase activities. Interacts (via C-terminus) with the helicase assembly factor; this interaction brings about the rapid assembly of the helicase onto ssDNA. Part of the replicase complex that includes the DNA polymerase, the polymerase clamp, the clamp loader complex, the single-stranded DNA binding protein, the primase, the DnaB-like replicative helicase and the helicase assembly factor.

Its function is as follows. ATP-dependent DNA helicase essential for viral DNA replication and recombination. The helicase moves 5' -&gt; 3' on the lagging strand template, unwinding the DNA duplex ahead of the leading strand polymerase at the replication fork and generating ssDNA for both leading and lagging strand synthesis. Interaction with the primase allows the primase to initiate lagging strand synthesis and fully activates the helicase. Loaded by the helicase assembly factor on replication forks that begin at discrete replication origin sequences, as well as on forks that are created during recombination. The polypeptide is DnaB-like replicative helicase (Escherichia coli (Bacteriophage T4)).